An 81-amino-acid chain; its full sequence is uncharacterized protein (81 aa).

This is an uncharacterized protein from Carnobacterium maltaromaticum (Carnobacterium piscicola).